The chain runs to 331 residues: Biotin synthase (331 aa).

The Radical SAM core domain occupies 39 to 264 (SELQTCYLVS…VFPQSMVRLA (226 aa)). The [4Fe-4S] cluster site is built by Cys54, Cys58, and Cys61. 4 residues coordinate [2Fe-2S] cluster: Cys98, Cys130, Cys190, and Arg262.

Belongs to the radical SAM superfamily. Biotin synthase family. As to quaternary structure, homodimer. [4Fe-4S] cluster is required as a cofactor. The cofactor is [2Fe-2S] cluster.

It catalyses the reaction (4R,5S)-dethiobiotin + (sulfur carrier)-SH + 2 reduced [2Fe-2S]-[ferredoxin] + 2 S-adenosyl-L-methionine = (sulfur carrier)-H + biotin + 2 5'-deoxyadenosine + 2 L-methionine + 2 oxidized [2Fe-2S]-[ferredoxin]. It functions in the pathway cofactor biosynthesis; biotin biosynthesis; biotin from 7,8-diaminononanoate: step 2/2. Functionally, catalyzes the conversion of dethiobiotin (DTB) to biotin by the insertion of a sulfur atom into dethiobiotin via a radical-based mechanism. This Chlamydia abortus (strain DSM 27085 / S26/3) (Chlamydophila abortus) protein is Biotin synthase.